Here is a 248-residue protein sequence, read N- to C-terminus: Probable N-acetylglucosaminyl-phosphatidylinositol de-N-acetylase (248 aa).

Residues 1–7 (MIWFWST) lie on the Lumenal side of the membrane. The chain crosses the membrane as a helical span at residues 8–24 (LLVTAIAVLSTANESSS). Residues 25 to 248 (GQEKLAVESI…MSNNVLKRAT (224 aa)) are Cytoplasmic-facing.

Belongs to the PIGL family.

Its subcellular location is the endoplasmic reticulum membrane. It catalyses the reaction a 6-(N-acetyl-alpha-D-glucosaminyl)-1-(1,2-diacyl-sn-glycero-3-phospho)-1D-myo-inositol + H2O = a 6-(alpha-D-glucosaminyl)-1-(1,2-diacyl-sn-glycero-3-phospho)-1D-myo-inositol + acetate. It functions in the pathway glycolipid biosynthesis; glycosylphosphatidylinositol-anchor biosynthesis. Its function is as follows. Involved in the second step of GPI biosynthesis. De-N-acetylation of N-acetylglucosaminyl-phosphatidylinositol. The chain is Probable N-acetylglucosaminyl-phosphatidylinositol de-N-acetylase (gpi12) from Schizosaccharomyces pombe (strain 972 / ATCC 24843) (Fission yeast).